A 150-amino-acid polypeptide reads, in one-letter code: MNVILLDKIANLGNLGDQVSVKAGYARNFLLPQGKAVVANAANTEVFEARRADLEAKLAADLAAATQRAEKISALESVVIASKAGDEGKLFGSIGNRDIADAVTAAGVELAKSEVRLPLGAIRTTGEFEVEVQVHTEVKAIVKLSVVAEA.

It belongs to the bacterial ribosomal protein bL9 family.

Binds to the 23S rRNA. In Shewanella halifaxensis (strain HAW-EB4), this protein is Large ribosomal subunit protein bL9.